A 306-amino-acid chain; its full sequence is Aspartate carbamoyltransferase catalytic subunit (306 aa).

Carbamoyl phosphate contacts are provided by arginine 55 and threonine 56. An L-aspartate-binding site is contributed by lysine 84. The carbamoyl phosphate site is built by arginine 105, histidine 133, and glutamine 136. L-aspartate contacts are provided by arginine 166 and arginine 227. 2 residues coordinate carbamoyl phosphate: leucine 265 and proline 266.

The protein belongs to the aspartate/ornithine carbamoyltransferase superfamily. ATCase family. Heterododecamer (2C3:3R2) of six catalytic PyrB chains organized as two trimers (C3), and six regulatory PyrI chains organized as three dimers (R2).

It catalyses the reaction carbamoyl phosphate + L-aspartate = N-carbamoyl-L-aspartate + phosphate + H(+). It participates in pyrimidine metabolism; UMP biosynthesis via de novo pathway; (S)-dihydroorotate from bicarbonate: step 2/3. Its function is as follows. Catalyzes the condensation of carbamoyl phosphate and aspartate to form carbamoyl aspartate and inorganic phosphate, the committed step in the de novo pyrimidine nucleotide biosynthesis pathway. This is Aspartate carbamoyltransferase catalytic subunit from Neisseria meningitidis serogroup C (strain 053442).